A 1166-amino-acid chain; its full sequence is Zinc finger CCHC domain-containing protein 2 (1166 aa).

Disordered stretches follow at residues 1-85 (MLRM…GGHA), 205-240 (RAEG…CAKL), 550-668 (SSAD…ARFS), and 904-982 (PASF…ISAV). Pro residues predominate over residues 43–64 (PPPPPTGLPRGPPPPPSPPRGL). The segment covering 65 to 76 (EPPVASGPTAGA) has biased composition (low complexity). Positions 214–223 (EDEPSGDGEQ) are enriched in acidic residues. Residues 572-587 (PQVEKEKVKKTEDRLN) show a composition bias toward basic and acidic residues. The segment covering 624-633 (SSESYSSPSS) has biased composition (low complexity). Basic and acidic residues predominate over residues 634-653 (PRHDGRESLESEEEKDRDSD). Residues 919-947 (LPTQNSSALNAATSAQPASTGISPSQSTV) are compositionally biased toward polar residues. The segment covering 949 to 963 (PAVPTHTPGPAPSPS) has biased composition (pro residues). A compositionally biased stretch (polar residues) spans 964 to 982 (PALTHSTAQSDSTSYISAV). The CCHC-type zinc finger occupies 1119-1136 (VSCYNCGVSGHYAQDCKQ).

In Mus musculus (Mouse), this protein is Zinc finger CCHC domain-containing protein 2 (Zcchc2).